The sequence spans 610 residues: UvrABC system protein C (610 aa).

Residues 16–94 (SQPGVYRMYD…IKLYQPRYNV (79 aa)) form the GIY-YIG domain. The region spanning 204 to 239 (DQVLTQLISRMETASQNLEFEEAARIRDQIQAVRRV) is the UVR domain.

The protein belongs to the UvrC family. In terms of assembly, interacts with UvrB in an incision complex.

The protein resides in the cytoplasm. Functionally, the UvrABC repair system catalyzes the recognition and processing of DNA lesions. UvrC both incises the 5' and 3' sides of the lesion. The N-terminal half is responsible for the 3' incision and the C-terminal half is responsible for the 5' incision. The protein is UvrABC system protein C of Escherichia coli (strain UTI89 / UPEC).